A 501-amino-acid chain; its full sequence is Probable sucrose utilization protein SUC1 (501 aa).

Positions 13-39 form a DNA-binding region, zn(2)-C6 fungal-type; sequence CDSCSFRKVKCDMKTPCSRCVLNNLKC.

It belongs to the MAL13 family.

It is found in the nucleus. Functionally, affects sucrose utilization and alpha-glucosidase activity. Probable transcriptional activator. In Candida albicans (strain SC5314 / ATCC MYA-2876) (Yeast), this protein is Probable sucrose utilization protein SUC1 (SUC1).